Reading from the N-terminus, the 84-residue chain is MAHKKAGGSSRNGRDSNGQRRGVKRYGGEIVRAGNILVRQVGTRIHPGENVGMGRDYTLFATIDGKVAYERKGRDKKKVSVYPV.

Residues 1–25 form a disordered region; it reads MAHKKAGGSSRNGRDSNGQRRGVKR.

Belongs to the bacterial ribosomal protein bL27 family.

The protein is Large ribosomal subunit protein bL27 of Desulfatibacillum aliphaticivorans.